The following is an 820-amino-acid chain: Serine/threonine-protein phosphatase 4 regulatory subunit 3-A (820 aa).

One can recognise a WH1 domain in the interval 1–100 (MSDTRRRVKV…DEIWEKICQV (100 aa)). Residues 682 to 694 (ELWFNEDDEEEGE) are compositionally biased toward acidic residues. 2 disordered regions span residues 682 to 712 (ELWFNEDDEEEGEAVVPPVEKTKPEDDFPEG) and 750 to 820 (AANG…RLGS). A compositionally biased stretch (basic and acidic residues) spans 701 to 712 (EKTKPEDDFPEG). Composition is skewed to polar residues over residues 750 to 761 (AANGANSTNSKS) and 768 to 790 (PATSNGSSSKNTSLTTTVASTKG). The span at 798–809 (YPDDEDEEEEED) shows a compositional bias: acidic residues.

The protein belongs to the SMEK family. As to quaternary structure, serine/threonine-protein phosphatase 4 (PP4) occurs in different assemblies of the catalytic and one or more regulatory subunits.

In terms of biological role, regulatory subunit of serine/threonine-protein phosphatase 4 (PP4). The protein is Serine/threonine-protein phosphatase 4 regulatory subunit 3-A of Xenopus laevis (African clawed frog).